We begin with the raw amino-acid sequence, 278 residues long: Biotin synthase (278 aa).

The region spanning 1 to 227 is the Radical SAM core domain; it reads MQIMLCAISN…QSVVMVAGGR (227 aa). Cys16, Cys20, and Cys23 together coordinate [4Fe-4S] cluster. Residues Cys60, Cys95, and Cys153 each coordinate [2Fe-2S] cluster.

The protein belongs to the radical SAM superfamily. Biotin synthase family. In terms of assembly, homodimer. [4Fe-4S] cluster serves as cofactor. [2Fe-2S] cluster is required as a cofactor.

It carries out the reaction (4R,5S)-dethiobiotin + (sulfur carrier)-SH + 2 reduced [2Fe-2S]-[ferredoxin] + 2 S-adenosyl-L-methionine = (sulfur carrier)-H + biotin + 2 5'-deoxyadenosine + 2 L-methionine + 2 oxidized [2Fe-2S]-[ferredoxin]. It participates in cofactor biosynthesis; biotin biosynthesis; biotin from 7,8-diaminononanoate: step 2/2. In terms of biological role, catalyzes the conversion of dethiobiotin (DTB) to biotin by the insertion of a sulfur atom into dethiobiotin via a radical-based mechanism. This Campylobacter jejuni subsp. jejuni serotype O:23/36 (strain 81-176) protein is Biotin synthase.